We begin with the raw amino-acid sequence, 429 residues long: C4-dicarboxylate transport protein (429 aa).

The next 8 membrane-spanning stretches (helical) occupy residues 3–23, 44–64, 76–96, 142–162, 184–204, 222–242, 326–346, and 352–372; these read LTIF…GVLL, LIKM…IAGM, IALL…LLIV, IGAF…LFGF, VIFG…FGAM, LIAC…GSIA, VIHQ…AAGV, and IVLA…LALI.

This sequence belongs to the dicarboxylate/amino acid:cation symporter (DAACS) (TC 2.A.23) family.

Its subcellular location is the cell inner membrane. Its function is as follows. Responsible for the transport of dicarboxylates such as succinate, fumarate, and malate from the periplasm across the membrane. In Serratia proteamaculans (strain 568), this protein is C4-dicarboxylate transport protein.